We begin with the raw amino-acid sequence, 288 residues long: Acetyl-coenzyme A carboxylase carboxyl transferase subunit beta (288 aa).

The CoA carboxyltransferase N-terminal domain occupies Leu34 to Gln288. Zn(2+) contacts are provided by Cys38, Cys41, Cys56, and Cys59. Residues Cys38–Cys59 form a C4-type zinc finger.

It belongs to the AccD/PCCB family. Acetyl-CoA carboxylase is a heterohexamer composed of biotin carboxyl carrier protein (AccB), biotin carboxylase (AccC) and two subunits each of ACCase subunit alpha (AccA) and ACCase subunit beta (AccD). The cofactor is Zn(2+).

It is found in the cytoplasm. The catalysed reaction is N(6)-carboxybiotinyl-L-lysyl-[protein] + acetyl-CoA = N(6)-biotinyl-L-lysyl-[protein] + malonyl-CoA. It functions in the pathway lipid metabolism; malonyl-CoA biosynthesis; malonyl-CoA from acetyl-CoA: step 1/1. Component of the acetyl coenzyme A carboxylase (ACC) complex. Biotin carboxylase (BC) catalyzes the carboxylation of biotin on its carrier protein (BCCP) and then the CO(2) group is transferred by the transcarboxylase to acetyl-CoA to form malonyl-CoA. The sequence is that of Acetyl-coenzyme A carboxylase carboxyl transferase subunit beta from Streptococcus pyogenes serotype M6 (strain ATCC BAA-946 / MGAS10394).